The sequence spans 252 residues: Zinc finger protein 511 (252 aa).

C2H2-type zinc fingers lie at residues phenylalanine 80–histidine 105, asparagine 107–histidine 130, and tyrosine 144–histidine 169. Residues phenylalanine 177–arginine 221 form a disordered region. Arginine 240 is subject to Omega-N-methylarginine.

It belongs to the krueppel C2H2-type zinc-finger protein family.

The protein localises to the nucleus. Its function is as follows. May be involved in transcriptional regulation. This chain is Zinc finger protein 511, found in Homo sapiens (Human).